The primary structure comprises 857 residues: Putative serine/threonine-protein kinase receptor (857 aa).

An N-terminal signal peptide occupies residues 1–32; sequence MKGARNIYHHSYMSFLLVFVVMILIHPALSIY. Residues 33–446 lie on the Extracellular side of the membrane; the sequence is INTLSSTESL…IAKKRNASGK (414 aa). Residues 35–155 enclose the Bulb-type lectin domain; sequence TLSSTESLTI…SNNDASEYLW (121 aa). N-linked (GlcNAc...) asparagine glycosylation is found at asparagine 47, asparagine 120, asparagine 196, asparagine 260, asparagine 389, and asparagine 442. In terms of domain architecture, PAN spans 350-433; the sequence is CSGDGFTRMK…DGQDLYVRLA (84 aa). 2 disulfide bridges follow: cysteine 380–cysteine 405 and cysteine 388–cysteine 390. Residues 447–466 form a helical membrane-spanning segment; sequence IISLTVGVSVLLLLIMFCLW. The Cytoplasmic portion of the chain corresponds to 467–857; it reads KRKQKRAKAS…QYTCSVIDAR (391 aa). The region spanning 528–779 is the Protein kinase domain; sequence FSSCNKLGQG…PSIFQPQEVL (252 aa). ATP contacts are provided by residues 534-542 and lysine 556; that span reads LGQGGFGIV. The active-site Proton acceptor is aspartate 653.

The protein belongs to the protein kinase superfamily. Ser/Thr protein kinase family. In terms of tissue distribution, predominantly in the pistil and anther.

Its subcellular location is the membrane. It catalyses the reaction L-seryl-[protein] + ATP = O-phospho-L-seryl-[protein] + ADP + H(+). It carries out the reaction L-threonyl-[protein] + ATP = O-phospho-L-threonyl-[protein] + ADP + H(+). Functionally, involved in sporophytic self-incompatibility system (the inability of flowering plants to achieve self-fertilization), probably acting in combination with S-locus-specific glycoproteins. Interaction with a ligand in the extracellular domain triggers the protein kinase activity of the cytoplasmic domain. The protein is Putative serine/threonine-protein kinase receptor (SRK6) of Brassica oleracea var. viridis (Flowering kale).